A 243-amino-acid chain; its full sequence is Ubiquinone biosynthesis O-methyltransferase (243 aa).

Positions 44, 64, 85, and 129 each coordinate S-adenosyl-L-methionine.

It belongs to the methyltransferase superfamily. UbiG/COQ3 family.

The catalysed reaction is a 3-demethylubiquinol + S-adenosyl-L-methionine = a ubiquinol + S-adenosyl-L-homocysteine + H(+). The enzyme catalyses a 3-(all-trans-polyprenyl)benzene-1,2-diol + S-adenosyl-L-methionine = a 2-methoxy-6-(all-trans-polyprenyl)phenol + S-adenosyl-L-homocysteine + H(+). It participates in cofactor biosynthesis; ubiquinone biosynthesis. Its function is as follows. O-methyltransferase that catalyzes the 2 O-methylation steps in the ubiquinone biosynthetic pathway. The chain is Ubiquinone biosynthesis O-methyltransferase from Cronobacter sakazakii (strain ATCC BAA-894) (Enterobacter sakazakii).